The sequence spans 300 residues: 2-oxoglutarate-dependent dioxygenase DAO (300 aa).

Residues 149 to 252 (WPCQFRMNRY…VSIAMFLLAP (104 aa)) enclose the Fe2OG dioxygenase domain. H173, D175, and H232 together coordinate Fe cation. R242 serves as a coordination point for 2-oxoglutarate.

This sequence belongs to the iron/ascorbate-dependent oxidoreductase family. Requires Fe(2+) as cofactor.

Functionally, 2-oxoglutarate-dependent dioxygenase essential for auxin catabolism and maintenance of auxin homeostasis in reproductive organs. Catalyzes the irreversible oxidation of indole-3-acetic acid (IAA) to the biologically inactive 2-oxoindole-3-acetic acid (OxIAA). The sequence is that of 2-oxoglutarate-dependent dioxygenase DAO (DAO) from Oryza sativa subsp. indica (Rice).